The chain runs to 523 residues: Cytochrome b5 reductase 4 (523 aa).

The 77-residue stretch at 54–130 (LIDVTEEELA…LKECLIGRMA (77 aa)) folds into the Cytochrome b5 heme-binding domain. His-89 and His-112 together coordinate heme. The CS domain occupies 167–258 (ESHPWYDWFQ…KEPVSWKSLG (92 aa)). The FAD-binding FR-type domain occupies 275-387 (LYYRKCRLAS…SNPQGTFSSF (113 aa)). FAD is bound by residues 367–382 (ENLTVGDYISISNPQG) and 394–426 (DVFLVAAGTGITPMIRLLQHVLTCVSSLRKAKL).

This sequence belongs to the flavoprotein pyridine nucleotide cytochrome reductase family. Requires FAD as cofactor.

It is found in the endoplasmic reticulum. It carries out the reaction 2 Fe(III)-[cytochrome b5] + NADH = 2 Fe(II)-[cytochrome b5] + NAD(+) + H(+). Functionally, NADH-cytochrome b5 reductase involved in endoplasmic reticulum stress response pathway. The chain is Cytochrome b5 reductase 4 (cyb5r4) from Xenopus tropicalis (Western clawed frog).